Here is a 356-residue protein sequence, read N- to C-terminus: Tyrosine recombinase XerS (356 aa).

A Core-binding (CB) domain is found at 16–121 (LMPWYVLEYY…ALSSLYKYLT (106 aa)). The 186-residue stretch at 169-354 (GFLTYIDQEH…VSDEQKNALD (186 aa)) folds into the Tyr recombinase domain. Residues Arg-210, Lys-234, His-306, Arg-309, and His-332 contribute to the active site. Tyr-341 functions as the O-(3'-phospho-DNA)-tyrosine intermediate in the catalytic mechanism.

Belongs to the 'phage' integrase family. XerS subfamily.

It localises to the cytoplasm. With respect to regulation, ftsK is required for recombination. Its function is as follows. Site-specific tyrosine recombinase, which acts by catalyzing the cutting and rejoining of the recombining DNA molecules. Essential to convert dimers of the bacterial chromosome into monomers to permit their segregation at cell division. In Streptococcus pneumoniae serotype 4 (strain ATCC BAA-334 / TIGR4), this protein is Tyrosine recombinase XerS.